We begin with the raw amino-acid sequence, 493 residues long: UDP-N-acetylmuramoyl-L-alanyl-D-glutamate--2,6-diaminopimelate ligase (493 aa).

Threonine 32 is a binding site for UDP-N-acetyl-alpha-D-muramoyl-L-alanyl-D-glutamate. 110-116 (GTNGKTT) contacts ATP. Residues asparagine 151, 152–153 (TT), serine 179, and arginine 187 contribute to the UDP-N-acetyl-alpha-D-muramoyl-L-alanyl-D-glutamate site. An N6-carboxylysine modification is found at lysine 219. Residues arginine 386, 410 to 413 (DNPR), glycine 460, and glutamate 464 contribute to the meso-2,6-diaminopimelate site. A Meso-diaminopimelate recognition motif motif is present at residues 410–413 (DNPR).

This sequence belongs to the MurCDEF family. MurE subfamily. Mg(2+) is required as a cofactor. Carboxylation is probably crucial for Mg(2+) binding and, consequently, for the gamma-phosphate positioning of ATP.

Its subcellular location is the cytoplasm. The enzyme catalyses UDP-N-acetyl-alpha-D-muramoyl-L-alanyl-D-glutamate + meso-2,6-diaminopimelate + ATP = UDP-N-acetyl-alpha-D-muramoyl-L-alanyl-gamma-D-glutamyl-meso-2,6-diaminopimelate + ADP + phosphate + H(+). The protein operates within cell wall biogenesis; peptidoglycan biosynthesis. In terms of biological role, catalyzes the addition of meso-diaminopimelic acid to the nucleotide precursor UDP-N-acetylmuramoyl-L-alanyl-D-glutamate (UMAG) in the biosynthesis of bacterial cell-wall peptidoglycan. This chain is UDP-N-acetylmuramoyl-L-alanyl-D-glutamate--2,6-diaminopimelate ligase, found in Lactiplantibacillus plantarum (strain ATCC BAA-793 / NCIMB 8826 / WCFS1) (Lactobacillus plantarum).